The following is a 552-amino-acid chain: DUF724 domain-containing protein 10 (552 aa).

The disordered stretch occupies residues 308 to 361 (SSLTQGSGDKTEVETQRKTFPKKTLPRNQNGSGNDSTLENENSNRKRKREENLC). Positions 333–348 (PRNQNGSGNDSTLENE) are enriched in polar residues. The DUF724 domain occupies 371 to 543 (ILFEKKLPVW…LEFQATASAP (173 aa)).

As to expression, expressed at low levels in leaves, stems, flowers and siliques.

Functionally, may be involved in the polar growth of plant cells via transportation of RNAs. The chain is DUF724 domain-containing protein 10 from Arabidopsis thaliana (Mouse-ear cress).